A 511-amino-acid polypeptide reads, in one-letter code: Synaptotagmin-6 (511 aa).

Residues 1-59 are Vesicular-facing; sequence MSGVWGAGGPRCQAALAVLASLCRARPPPLGLDVETCQSFELQPPEQSPSAADSGTSVS. The segment at 12 to 38 is cysteine motif; that stretch reads CQAALAVLASLCRARPPPLGLDVETCQ. A helical membrane pass occupies residues 60–80; the sequence is LLAVVVIVCGVALVAVFFFLF. Topologically, residues 81-511 are cytoplasmic; that stretch reads WKLCWMPWRN…KSFKEGTPRL (431 aa). Positions 93-103 are enriched in low complexity; the sequence is ASSPSSANPAS. Disordered regions lie at residues 93 to 118 and 157 to 182; these read ASSPSSANPASEILQSPSSRGNMADK and TKLQRQTTEPASSTRHTSFKRHLPRQ. Positions 160–172 are enriched in polar residues; that stretch reads QRQTTEPASSTRH. Position 217 is a phosphoserine (Ser-217). 2 consecutive C2 domains span residues 230-351 and 362-495; these read SCGK…SIWK and DLGE…AHWH. Ca(2+) contacts are provided by Asp-261, Asp-267, Asp-319, Phe-320, Asp-321, Ser-324, Asp-327, Asp-393, Asp-399, Asp-453, and Asp-455. The necessary for cell membrane association (isoform 2) stretch occupies residues 483-511; it reads MLAYPRKPIAHWHCLAEVKKSFKEGTPRL.

It belongs to the synaptotagmin family. Isoform 1: Homodimer; disulfide-linked via the cysteine motif. Isoform 1: Can also form heterodimers with SYT3, SYT7, SYT9 and SYT10. Isoform 1: Interacts with STX1A, STX1B and STX2; the interaction is Ca(2+)-dependent. Isoform 2: Is not able to form homodimer and heterodimers. Ca(2+) serves as cofactor.

Its subcellular location is the cytoplasmic vesicle. It is found in the secretory vesicle. The protein resides in the synaptic vesicle membrane. The protein localises to the membrane. It localises to the cytoplasm. Its subcellular location is the cytosol. It is found in the cell membrane. In terms of biological role, may be involved in Ca(2+)-dependent exocytosis of secretory vesicles through Ca(2+) and phospholipid binding to the C2 domain or may serve as Ca(2+) sensors in the process of vesicular trafficking and exocytosis. May mediate Ca(2+)-regulation of exocytosis in acrosomal reaction in sperm. This is Synaptotagmin-6 (Syt6) from Rattus norvegicus (Rat).